The following is a 626-amino-acid chain: Protein ALEX (626 aa).

Disordered stretches follow at residues 1–29, 173–223, 236–473, and 556–612; these read MMAR…LEPM, TTAH…AAHP, AAPG…APRS, and AASV…NNSR. Polar residues-rich tracts occupy residues 186-195 and 255-270; these read KSTAAASSRQ and GSTT…QSRL. A compositionally biased stretch (basic and acidic residues) spans 281–312; the sequence is QIRESEQRDPQLRRKQQRWKEPLMPRREEKYP. Over residues 337-346 the composition is skewed to low complexity; it reads QPILTPGQPQ. Residues 366–399 are compositionally biased toward pro residues; the sequence is IPTPGQPLPPQPIPTPGRPLTPQPIPTPGRPLTP. Over residues 416 to 435 the composition is skewed to low complexity; the sequence is RLLRPGQPMSPQLRQTQGLP. Residues 436 to 445 show a composition bias toward pro residues; the sequence is LPQPLLPPGQ. Basic residues predominate over residues 570–579; that stretch reads ALSRSRRYPW. Residues 600 to 611 show a composition bias toward polar residues; the sequence is RRNAVSSSTNNS.

This sequence belongs to the ALEX family. As to quaternary structure, interacts with the N-terminal region of the XLas isoforms of guanine nucleotide-binding protein G(s) subunit alpha.

The protein localises to the cell membrane. It localises to the cell projection. The protein resides in the ruffle. In terms of biological role, may inhibit the adenylyl cyclase-stimulating activity of guanine nucleotide-binding protein G(s) subunit alpha which is produced from the same locus in a different open reading frame. In Homo sapiens (Human), this protein is Protein ALEX.